Reading from the N-terminus, the 1770-residue chain is Transposon Ty2-F Gag-Pol polyprotein (1770 aa).

Polar residues-rich tracts occupy residues 1–11 (MESQQLHQNPH), 19–39 (ASVT…SASN), and 49–60 (KVNSQQETTPGT). Disordered regions lie at residues 1–86 (MESQ…GQYQ) and 359–453 (QHSE…LPDH). Residues 295-397 (ENNINVSDRL…SSKPRAAKAH (103 aa)) are RNA-binding. A compositionally biased stretch (low complexity) spans 369–381 (TSPNTTNTKVTTR). Polar residues-rich tracts occupy residues 399 to 408 (IATSSKFSRV) and 415 to 435 (ESTV…GQQQ). Asp457 functions as the For protease activity; shared with dimeric partner in the catalytic mechanism. The segment at 579-636 (NVNKSKSVNKYPYPLIHRMLGHANFRSIQKSLKKNAVTYLKESDIEWSNASTYQCPDC) is integrase-type zinc finger-like. One can recognise an Integrase catalytic domain in the interval 656-831 (ESYEPFQYLH…AGLDITTILP (176 aa)). 2 residues coordinate Mg(2+): Asp667 and Asp732. Disordered regions lie at residues 1004-1034 (MGGT…STNE), 1059-1135 (TEEP…KSSK), 1146-1165 (LPLP…VSKD), and 1170-1205 (HSRQ…TEIE). Composition is skewed to polar residues over residues 1009–1034 (ESDT…STNE) and 1065–1082 (QRNS…STPS). A compositionally biased stretch (basic and acidic residues) spans 1151–1165 (LTHKSPTDTSDVSKD). The Bipartite nuclear localization signal motif lies at 1193 to 1227 (KKRSLEDNETEIEVSRDTWNNKNMRSLEPPRSKKR). A Reverse transcriptase Ty1/copia-type domain is found at 1353–1491 (NDYYITQLDI…DILGLEIKYQ (139 aa)). The Mg(2+) site is built by Asp1361, Asp1442, Asp1443, Asp1625, Glu1667, and Asp1700. The RNase H Ty1/copia-type domain occupies 1625-1767 (DASYGNQPYY…IKTFKLLTNK (143 aa)).

The capsid protein forms a homotrimer, from which the VLPs are assembled. The protease is a homodimer, whose active site consists of two apposed aspartic acid residues. In terms of processing, initially, virus-like particles (VLPs) are composed of the structural unprocessed proteins Gag and Gag-Pol, and also contain the host initiator methionine tRNA (tRNA(i)-Met) which serves as a primer for minus-strand DNA synthesis, and a dimer of genomic Ty RNA. Processing of the polyproteins occurs within the particle and proceeds by an ordered pathway, called maturation. First, the protease (PR) is released by autocatalytic cleavage of the Gag-Pol polyprotein, and this cleavage is a prerequisite for subsequent processing at the remaining sites to release the mature structural and catalytic proteins. Maturation takes place prior to the RT reaction and is required to produce transposition-competent VLPs.

The protein resides in the cytoplasm. The protein localises to the nucleus. The enzyme catalyses DNA(n) + a 2'-deoxyribonucleoside 5'-triphosphate = DNA(n+1) + diphosphate. It carries out the reaction Endonucleolytic cleavage to 5'-phosphomonoester.. In terms of biological role, capsid protein (CA) is the structural component of the virus-like particle (VLP), forming the shell that encapsulates the retrotransposons dimeric RNA genome. The particles are assembled from trimer-clustered units and there are holes in the capsid shells that allow for the diffusion of macromolecules. CA also has nucleocapsid-like chaperone activity, promoting primer tRNA(i)-Met annealing to the multipartite primer-binding site (PBS), dimerization of Ty2 RNA and initiation of reverse transcription. Functionally, the aspartyl protease (PR) mediates the proteolytic cleavages of the Gag and Gag-Pol polyproteins after assembly of the VLP. Its function is as follows. Reverse transcriptase/ribonuclease H (RT) is a multifunctional enzyme that catalyzes the conversion of the retro-elements RNA genome into dsDNA within the VLP. The enzyme displays a DNA polymerase activity that can copy either DNA or RNA templates, and a ribonuclease H (RNase H) activity that cleaves the RNA strand of RNA-DNA heteroduplexes during plus-strand synthesis and hydrolyzes RNA primers. The conversion leads to a linear dsDNA copy of the retrotransposon that includes long terminal repeats (LTRs) at both ends. Integrase (IN) targets the VLP to the nucleus, where a subparticle preintegration complex (PIC) containing at least integrase and the newly synthesized dsDNA copy of the retrotransposon must transit the nuclear membrane. Once in the nucleus, integrase performs the integration of the dsDNA into the host genome. This Saccharomyces cerevisiae (strain ATCC 204508 / S288c) (Baker's yeast) protein is Transposon Ty2-F Gag-Pol polyprotein (TY2B-F).